A 519-amino-acid polypeptide reads, in one-letter code: 2-isopropylmalate synthase (519 aa).

In terms of domain architecture, Pyruvate carboxyltransferase spans 5–267; it reads VIIFDTTLRD…TTNVNPMEIS (263 aa). The Mn(2+) site is built by Asp-14, His-202, His-204, and Asn-238. The segment at 392–519 is regulatory domain; the sequence is RLESINVQSG…KEQLIHIDQV (128 aa).

It belongs to the alpha-IPM synthase/homocitrate synthase family. LeuA type 1 subfamily. In terms of assembly, homodimer. Requires Mn(2+) as cofactor.

The protein localises to the cytoplasm. It carries out the reaction 3-methyl-2-oxobutanoate + acetyl-CoA + H2O = (2S)-2-isopropylmalate + CoA + H(+). It participates in amino-acid biosynthesis; L-leucine biosynthesis; L-leucine from 3-methyl-2-oxobutanoate: step 1/4. Functionally, catalyzes the condensation of the acetyl group of acetyl-CoA with 3-methyl-2-oxobutanoate (2-ketoisovalerate) to form 3-carboxy-3-hydroxy-4-methylpentanoate (2-isopropylmalate). The sequence is that of 2-isopropylmalate synthase from Psychromonas ingrahamii (strain DSM 17664 / CCUG 51855 / 37).